Here is a 299-residue protein sequence, read N- to C-terminus: 33 kDa chaperonin (299 aa).

2 disulfides stabilise this stretch: cysteine 240/cysteine 242 and cysteine 273/cysteine 276.

Belongs to the HSP33 family. Post-translationally, under oxidizing conditions two disulfide bonds are formed involving the reactive cysteines. Under reducing conditions zinc is bound to the reactive cysteines and the protein is inactive.

The protein resides in the cytoplasm. In terms of biological role, redox regulated molecular chaperone. Protects both thermally unfolding and oxidatively damaged proteins from irreversible aggregation. Plays an important role in the bacterial defense system toward oxidative stress. This is 33 kDa chaperonin from Thermosynechococcus vestitus (strain NIES-2133 / IAM M-273 / BP-1).